The primary structure comprises 440 residues: Protein dumpy-20 (440 aa).

The interval 96–119 is disordered; sequence ILSDPSLHGSNSSSSTSDVGSSVD. Over residues 98-119 the composition is skewed to low complexity; that stretch reads SDPSLHGSNSSSSTSDVGSSVD. BED-type zinc fingers lie at residues 137–186 and 350–399; these read PTEN…YQKV and KTEH…YNDV. Positions 156, 159, 174, 179, 369, 372, 387, and 392 each coordinate Zn(2+).

In terms of biological role, may be directly or indirectly involved in cuticle function. This Caenorhabditis elegans protein is Protein dumpy-20 (dpy-20).